The chain runs to 258 residues: Protein SseB (258 aa).

May be involved in the enhancement of serine-sensitivity. This Escherichia coli (strain K12) protein is Protein SseB (sseB).